The chain runs to 665 residues: Adenylate cyclase 1 (665 aa).

The segment at 1–25 is disordered; that stretch reads MLQRSESGFKDIESMQDSNADKPSR. Over residues 7–24 the composition is skewed to basic and acidic residues; it reads SGFKDIESMQDSNADKPS. The next 2 helical transmembrane spans lie at 33-53 and 373-393; these read SLLG…LVGL and AVSG…AHLI. Residues 394–444 form the HAMP domain; sequence TKSLNQLTDSANRLQDLDFATPIDVSSHVAEISTLNGAMNRARDAIFTFAL. A Guanylate cyclase domain is found at 471–603; the sequence is TAMFTDIYDF…DTVNVASRLE (133 aa). Mg(2+) is bound by residues D476 and D520.

Belongs to the adenylyl cyclase class-3 family. Mg(2+) is required as a cofactor.

Its subcellular location is the cell membrane. The enzyme catalyses ATP = 3',5'-cyclic AMP + diphosphate. Plays essential roles in regulation of cellular metabolism by catalyzing the synthesis of a second messenger, cAMP. This chain is Adenylate cyclase 1 (cya1), found in Rhizobium meliloti (strain 1021) (Ensifer meliloti).